Here is a 160-residue protein sequence, read N- to C-terminus: Cytochrome b6-f complex subunit 4 (160 aa).

Helical transmembrane passes span 36-56 (LLYIFPVVILGTIACNVGLAV), 95-115 (LLGVLLMVSVPTGLLTVPFLE), and 131-151 (TVFLIGTAVALWLGIGATLPI).

It belongs to the cytochrome b family. PetD subfamily. As to quaternary structure, the 4 large subunits of the cytochrome b6-f complex are cytochrome b6, subunit IV (17 kDa polypeptide, petD), cytochrome f and the Rieske protein, while the 4 small subunits are petG, petL, petM and petN. The complex functions as a dimer.

The protein localises to the plastid. It localises to the chloroplast thylakoid membrane. Component of the cytochrome b6-f complex, which mediates electron transfer between photosystem II (PSII) and photosystem I (PSI), cyclic electron flow around PSI, and state transitions. The polypeptide is Cytochrome b6-f complex subunit 4 (Oryza nivara (Indian wild rice)).